We begin with the raw amino-acid sequence, 328 residues long: Probable E3 ubiquitin-protein ligase RHC1A (328 aa).

At Ser2 the chain carries N-acetylserine. An RING-type; atypical zinc finger spans residues 190 to 231 (CPVCKDEFELGSEAKQMPCNHIYHSDCIVPWLVQHNSCPVCR). A disordered region spans residues 233–324 (ELPSASGPSS…QQSYMGYSGW (92 aa)). Residues 238–250 (SGPSSSQNRTTPT) are compositionally biased toward polar residues. Low complexity-rich tracts occupy residues 251–266 (RNYRSSSSSSSSNSRE) and 275–290 (FSSFWPFRSSGSSSSS). Residues 291-300 (TQNRGGTRNS) are compositionally biased toward polar residues.

It catalyses the reaction S-ubiquitinyl-[E2 ubiquitin-conjugating enzyme]-L-cysteine + [acceptor protein]-L-lysine = [E2 ubiquitin-conjugating enzyme]-L-cysteine + N(6)-ubiquitinyl-[acceptor protein]-L-lysine.. It participates in protein modification; protein ubiquitination. Its function is as follows. Probable E3 ubiquitin-protein ligase that may possess E3 ubiquitin ligase activity in vitro. The sequence is that of Probable E3 ubiquitin-protein ligase RHC1A from Arabidopsis thaliana (Mouse-ear cress).